Reading from the N-terminus, the 292-residue chain is 4-hydroxy-tetrahydrodipicolinate synthase (292 aa).

T45 serves as a coordination point for pyruvate. Catalysis depends on Y133, which acts as the Proton donor/acceptor. K161 acts as the Schiff-base intermediate with substrate in catalysis. I203 contributes to the pyruvate binding site.

This sequence belongs to the DapA family. Homotetramer; dimer of dimers.

Its subcellular location is the cytoplasm. The catalysed reaction is L-aspartate 4-semialdehyde + pyruvate = (2S,4S)-4-hydroxy-2,3,4,5-tetrahydrodipicolinate + H2O + H(+). It participates in amino-acid biosynthesis; L-lysine biosynthesis via DAP pathway; (S)-tetrahydrodipicolinate from L-aspartate: step 3/4. Its function is as follows. Catalyzes the condensation of (S)-aspartate-beta-semialdehyde [(S)-ASA] and pyruvate to 4-hydroxy-tetrahydrodipicolinate (HTPA). This chain is 4-hydroxy-tetrahydrodipicolinate synthase, found in Dechloromonas aromatica (strain RCB).